The following is a 414-amino-acid chain: Serine--tRNA ligase (414 aa).

Position 230–232 (230–232 (TAE)) interacts with L-serine. Position 261–263 (261–263 (RKE)) interacts with ATP. E284 contributes to the L-serine binding site. An ATP-binding site is contributed by 348–351 (EISS). S382 lines the L-serine pocket.

The protein belongs to the class-II aminoacyl-tRNA synthetase family. Type-1 seryl-tRNA synthetase subfamily. As to quaternary structure, homodimer. The tRNA molecule binds across the dimer.

It is found in the cytoplasm. It catalyses the reaction tRNA(Ser) + L-serine + ATP = L-seryl-tRNA(Ser) + AMP + diphosphate + H(+). The catalysed reaction is tRNA(Sec) + L-serine + ATP = L-seryl-tRNA(Sec) + AMP + diphosphate + H(+). The protein operates within aminoacyl-tRNA biosynthesis; selenocysteinyl-tRNA(Sec) biosynthesis; L-seryl-tRNA(Sec) from L-serine and tRNA(Sec): step 1/1. Catalyzes the attachment of serine to tRNA(Ser). Is also able to aminoacylate tRNA(Sec) with serine, to form the misacylated tRNA L-seryl-tRNA(Sec), which will be further converted into selenocysteinyl-tRNA(Sec). The polypeptide is Serine--tRNA ligase (Sulfurovum sp. (strain NBC37-1)).